Reading from the N-terminus, the 1381-residue chain is DNA-directed RNA polymerase subunit beta'' (1381 aa).

Residues Cys-224, Cys-296, Cys-303, and Cys-306 each contribute to the Zn(2+) site.

This sequence belongs to the RNA polymerase beta' chain family. RpoC2 subfamily. In plastids the minimal PEP RNA polymerase catalytic core is composed of four subunits: alpha, beta, beta', and beta''. When a (nuclear-encoded) sigma factor is associated with the core the holoenzyme is formed, which can initiate transcription. Zn(2+) is required as a cofactor.

Its subcellular location is the plastid. It is found in the chloroplast. It catalyses the reaction RNA(n) + a ribonucleoside 5'-triphosphate = RNA(n+1) + diphosphate. In terms of biological role, DNA-dependent RNA polymerase catalyzes the transcription of DNA into RNA using the four ribonucleoside triphosphates as substrates. In Drimys granadensis, this protein is DNA-directed RNA polymerase subunit beta''.